Consider the following 359-residue polypeptide: DNA integrity scanning protein DisA (359 aa).

The region spanning aspartate 7 to alanine 145 is the DAC domain. ATP contacts are provided by residues glycine 74, leucine 92, and threonine 105–threonine 109.

This sequence belongs to the DisA family. As to quaternary structure, homooctamer. It depends on Mg(2+) as a cofactor.

The enzyme catalyses 2 ATP = 3',3'-c-di-AMP + 2 diphosphate. Its function is as follows. Participates in a DNA-damage check-point that is active prior to asymmetric division when DNA is damaged. DisA forms globular foci that rapidly scan along the chromosomes during sporulation, searching for lesions. When a lesion is present, DisA pauses at the lesion site. This triggers a cellular response that culminates in a temporary block in sporulation initiation. In terms of biological role, also has diadenylate cyclase activity, catalyzing the condensation of 2 ATP molecules into cyclic di-AMP (c-di-AMP). c-di-AMP acts as a signaling molecule that couples DNA integrity with progression of sporulation. The rise in c-di-AMP level generated by DisA while scanning the chromosome, operates as a positive signal that advances sporulation; upon encountering a lesion, the DisA focus arrests at the damaged site and halts c-di-AMP synthesis. This is DNA integrity scanning protein DisA from Parafrankia sp. (strain EAN1pec).